The sequence spans 202 residues: LexA repressor (202 aa).

Positions 28-48 form a DNA-binding region, H-T-H motif; it reads RAEIAQRLGFRSPNAAEEHLK. Catalysis depends on for autocatalytic cleavage activity residues Ser-119 and Lys-156.

The protein belongs to the peptidase S24 family. As to quaternary structure, homodimer.

It carries out the reaction Hydrolysis of Ala-|-Gly bond in repressor LexA.. In terms of biological role, represses a number of genes involved in the response to DNA damage (SOS response), including recA and lexA. Binds to the 16 bp palindromic sequence 5'-CTGTATATATATACAG-3'. In the presence of single-stranded DNA, RecA interacts with LexA causing an autocatalytic cleavage which disrupts the DNA-binding part of LexA, leading to derepression of the SOS regulon and eventually DNA repair. The chain is LexA repressor from Yersinia enterocolitica serotype O:8 / biotype 1B (strain NCTC 13174 / 8081).